Reading from the N-terminus, the 330-residue chain is Malate dehydrogenase (330 aa).

Gly13–Gly19 is an NAD(+) binding site. Residues Arg94 and Arg100 each coordinate substrate. NAD(+)-binding positions include Asn107, Gln114, and Val131 to Asn133. Residues Asn133 and Arg164 each coordinate substrate. Catalysis depends on His189, which acts as the Proton acceptor.

Belongs to the LDH/MDH superfamily. MDH type 2 family.

It catalyses the reaction (S)-malate + NAD(+) = oxaloacetate + NADH + H(+). In terms of biological role, catalyzes the reversible oxidation of malate to oxaloacetate. The chain is Malate dehydrogenase from Deinococcus radiodurans (strain ATCC 13939 / DSM 20539 / JCM 16871 / CCUG 27074 / LMG 4051 / NBRC 15346 / NCIMB 9279 / VKM B-1422 / R1).